The primary structure comprises 417 residues: Serine hydroxymethyltransferase (417 aa).

Residues Leu120 and 124 to 126 (GHL) contribute to the (6S)-5,6,7,8-tetrahydrofolate site. Lys229 is subject to N6-(pyridoxal phosphate)lysine. Position 354–356 (354–356 (SPF)) interacts with (6S)-5,6,7,8-tetrahydrofolate.

It belongs to the SHMT family. Homodimer. Pyridoxal 5'-phosphate serves as cofactor.

Its subcellular location is the cytoplasm. The enzyme catalyses (6R)-5,10-methylene-5,6,7,8-tetrahydrofolate + glycine + H2O = (6S)-5,6,7,8-tetrahydrofolate + L-serine. It functions in the pathway one-carbon metabolism; tetrahydrofolate interconversion. It participates in amino-acid biosynthesis; glycine biosynthesis; glycine from L-serine: step 1/1. In terms of biological role, catalyzes the reversible interconversion of serine and glycine with tetrahydrofolate (THF) serving as the one-carbon carrier. This reaction serves as the major source of one-carbon groups required for the biosynthesis of purines, thymidylate, methionine, and other important biomolecules. Also exhibits THF-independent aldolase activity toward beta-hydroxyamino acids, producing glycine and aldehydes, via a retro-aldol mechanism. The polypeptide is Serine hydroxymethyltransferase (Acinetobacter radioresistens).